The sequence spans 508 residues: Photosystem II CP47 reaction center protein (508 aa).

Helical transmembrane passes span 21 to 36, 101 to 115, 140 to 156, 203 to 218, 237 to 252, and 457 to 472; these read AVHI…WAGS, IVFS…IWHW, GIHL…FGAF, IAAG…FHLS, VLSS…AFVV, and SFAL…HGAR.

The protein belongs to the PsbB/PsbC family. PsbB subfamily. PSII is composed of 1 copy each of membrane proteins PsbA, PsbB, PsbC, PsbD, PsbE, PsbF, PsbH, PsbI, PsbJ, PsbK, PsbL, PsbM, PsbT, PsbX, PsbY, PsbZ, Psb30/Ycf12, at least 3 peripheral proteins of the oxygen-evolving complex and a large number of cofactors. It forms dimeric complexes. The cofactor is Binds multiple chlorophylls. PSII binds additional chlorophylls, carotenoids and specific lipids..

Its subcellular location is the plastid. The protein localises to the chloroplast thylakoid membrane. Functionally, one of the components of the core complex of photosystem II (PSII). It binds chlorophyll and helps catalyze the primary light-induced photochemical processes of PSII. PSII is a light-driven water:plastoquinone oxidoreductase, using light energy to abstract electrons from H(2)O, generating O(2) and a proton gradient subsequently used for ATP formation. In Buxus microphylla (Littleleaf boxwood), this protein is Photosystem II CP47 reaction center protein.